Here is a 457-residue protein sequence, read N- to C-terminus: Endo-1,3(4)-beta-glucanase ARB_04519 (457 aa).

A signal peptide spans Met-1–Ala-18. The region spanning Thr-19 to Ala-319 is the GH16 domain. The active-site Nucleophile is Glu-130. Glu-135 functions as the Proton donor in the catalytic mechanism. Residue Asn-200 is glycosylated (N-linked (GlcNAc...) asparagine). The disordered stretch occupies residues Thr-318–Ala-397. Residues Thr-333–Thr-352 show a composition bias toward low complexity. Residues Gln-353–Thr-362 show a composition bias toward polar residues. Over residues Pro-368–Gln-378 the composition is skewed to low complexity.

The protein belongs to the glycosyl hydrolase 16 family.

The protein resides in the secreted. It catalyses the reaction Endohydrolysis of (1-&gt;3)- or (1-&gt;4)-linkages in beta-D-glucans when the glucose residue whose reducing group is involved in the linkage to be hydrolyzed is itself substituted at C-3.. Functionally, mixed-linked glucanase involved in the degradation of complex natural cellulosic substrates. Active on laminarin. lichenan, soluble carboxymethyl cellulose but not on pustulan. In Arthroderma benhamiae (strain ATCC MYA-4681 / CBS 112371) (Trichophyton mentagrophytes), this protein is Endo-1,3(4)-beta-glucanase ARB_04519.